Consider the following 543-residue polypeptide: MATSLSADSPQQLSSLSTQQTTLLLLFSVLAAVHLGQWLLRQWQRKPWSSPPGPFPWPLIGNAAAVGQASHLYFARLARRYGDVFQIRLGSCPVVVLNGESAIHQALVQQGSIFADRPPFASFRVVSGGRSLAFGHYSEHWKTQRRSAYSTMRAFSTRHPRSRGLLEGHALAEARELVAVLVRRCAGGAFLDPTQPVIVAVANVMSAVCFGCRYNHDDAEFLELLSHNEEFGRTVGAGSLVDVLPWLQLFPNPVRTTFRKFEQLNRNFSNFVLDKFLRHRESLVPGAAPRDMTDAFILSAEKKASGAPGDDSSGLDLEDVPATITDIFGASQDTLSTALLWLLILFTRYPDVQARVQAELDQVVGRDRLPCMSDQPNLPYVMAFLYESMRFSSFLPVTIPHATTANTFVLGYYIPKNTVVFVNQWSVNHDPAKWPNPEDFDPARFLDKDGFINKALASSVMIFSVGKRRCIGEELSKMLLFLFISILAHQCNFKANQNESSNMSFSYGLTIKPKSFRIHVSLRESMELLDNAVKKLQTEEGCK.

C470 contributes to the heme binding site.

Belongs to the cytochrome P450 family. Requires heme as cofactor. As to expression, constitutively expressed in retinal and kidney pericytes cells. Expressed in retinal endothelial cells (at protein level). Expressed in cardiac, pulmonary and aortic endothelial cells. Constitutively expressed in trabecular meshwork of the eye (at protein level).

Its subcellular location is the endoplasmic reticulum membrane. The protein localises to the microsome membrane. It localises to the mitochondrion. It catalyses the reaction an organic molecule + reduced [NADPH--hemoprotein reductase] + O2 = an alcohol + oxidized [NADPH--hemoprotein reductase] + H2O + H(+). The enzyme catalyses 17beta-estradiol + reduced [NADPH--hemoprotein reductase] + O2 = 2-hydroxy-17beta-estradiol + oxidized [NADPH--hemoprotein reductase] + H2O + H(+). The catalysed reaction is 17beta-estradiol + reduced [NADPH--hemoprotein reductase] + O2 = 4-hydroxy-17beta-estradiol + oxidized [NADPH--hemoprotein reductase] + H2O + H(+). It carries out the reaction estrone + reduced [NADPH--hemoprotein reductase] + O2 = 2-hydroxyestrone + oxidized [NADPH--hemoprotein reductase] + H2O + H(+). It catalyses the reaction estrone + reduced [NADPH--hemoprotein reductase] + O2 = 4-hydroxyestrone + oxidized [NADPH--hemoprotein reductase] + H2O + H(+). The enzyme catalyses testosterone + reduced [NADPH--hemoprotein reductase] + O2 = 6beta,17beta-dihydroxyandrost-4-en-3-one + oxidized [NADPH--hemoprotein reductase] + H2O + H(+). The catalysed reaction is progesterone + reduced [NADPH--hemoprotein reductase] + O2 = 6beta-hydroxyprogesterone + oxidized [NADPH--hemoprotein reductase] + H2O + H(+). It carries out the reaction progesterone + reduced [NADPH--hemoprotein reductase] + O2 = 16alpha-hydroxyprogesterone + oxidized [NADPH--hemoprotein reductase] + H2O + H(+). It catalyses the reaction all-trans-retinol + reduced [NADPH--hemoprotein reductase] + O2 = all-trans-retinal + oxidized [NADPH--hemoprotein reductase] + 2 H2O + H(+). The enzyme catalyses all-trans-retinal + reduced [NADPH--hemoprotein reductase] + O2 = all-trans-retinoate + oxidized [NADPH--hemoprotein reductase] + H2O + 2 H(+). The catalysed reaction is (5Z,8Z,11Z,14Z)-eicosatetraenoate + reduced [NADPH--hemoprotein reductase] + O2 = (8R,9S)-epoxy-(5Z,11Z,14Z)-eicosatrienoate + oxidized [NADPH--hemoprotein reductase] + H2O + H(+). It carries out the reaction (5Z,8Z,11Z,14Z)-eicosatetraenoate + reduced [NADPH--hemoprotein reductase] + O2 = (11R,12S)-epoxy-(5Z,8Z,14Z)-eicosatrienoate + oxidized [NADPH--hemoprotein reductase] + H2O + H(+). It catalyses the reaction (5Z,8Z,11Z,14Z)-eicosatetraenoate + reduced [NADPH--hemoprotein reductase] + O2 = (11S,12R)-epoxy-(5Z,8Z,14Z)-eicosatrienoate + oxidized [NADPH--hemoprotein reductase] + H2O + H(+). The enzyme catalyses (5Z,8Z,11Z,14Z)-eicosatetraenoate + reduced [NADPH--hemoprotein reductase] + O2 = (14R,15S)-epoxy-(5Z,8Z,11Z)-eicosatrienoate + oxidized [NADPH--hemoprotein reductase] + H2O + H(+). The catalysed reaction is (5S)-hydroperoxy-(6E,8Z,11Z,14Z)-eicosatetraenoate = 5-oxo-(6E,8Z,11Z,14Z)-eicosatetraenoate + H2O. It carries out the reaction (12S)-hydroperoxy-(5Z,8Z,10E,14Z)-eicosatetraenoate = 12-oxo-(5Z,8Z,10E,14Z)-eicosatetraenoate + H2O. It catalyses the reaction (13S)-hydroperoxy-(9Z,11E)-octadecadienoate = 13-oxo-(9Z,11E)-octadecadienoate + H2O. The enzyme catalyses (15S)-hydroperoxy-(5Z,8Z,11Z,13E)-eicosatetraenoate = 15-oxo-(5Z,8Z,11Z,13E)-eicosatetraenoate + H2O. It functions in the pathway steroid hormone biosynthesis. Its pathway is cofactor metabolism; retinol metabolism. It participates in lipid metabolism; arachidonate metabolism. With respect to regulation, enzyme activity is increased by cytochrome b5. Enzyme activity is increased by liposomes containing anionic phospholipids, phosphatidic acid and cardiolipin. Inhibited by naringenin with an IC(50) of 5 uM. Functionally, a cytochrome P450 monooxygenase involved in the metabolism of various endogenous substrates, including fatty acids, steroid hormones and vitamins. Mechanistically, uses molecular oxygen inserting one oxygen atom into a substrate, and reducing the second into a water molecule, with two electrons provided by NADPH via cytochrome P450 reductase (NADPH--hemoprotein reductase). Exhibits catalytic activity for the formation of hydroxyestrogens from 17beta-estradiol (E2), namely 2- and 4-hydroxy E2. Metabolizes testosterone and progesterone to B or D ring hydroxylated metabolites. May act as a major enzyme for all-trans retinoic acid biosynthesis in extrahepatic tissues. Catalyzes two successive oxidative transformation of all-trans retinol to all-trans retinal and then to the active form all-trans retinoic acid. Catalyzes the epoxidation of double bonds of certain PUFA. Converts arachidonic acid toward epoxyeicosatrienoic acid (EpETrE) regioisomers, 8,9-, 11,12-, and 14,15- EpETrE, that function as lipid mediators in the vascular system. Additionally, displays dehydratase activity toward oxygenated eicosanoids hydroperoxyeicosatetraenoates (HpETEs). This activity is independent of cytochrome P450 reductase, NADPH, and O2. Also involved in the oxidative metabolism of xenobiotics, particularly converting polycyclic aromatic hydrocarbons and heterocyclic aryl amines procarcinogens to DNA-damaging products. Plays an important role in retinal vascular development. Under ambient/hyperoxic O2 conditions, promotes angiogenesis and capillary morphogenesis of retinal endothelial cells and pericytes, likely by metabolizing the oxygenated products symptomatic of oxidative stress. Also, contributes to oxidative homeostasis and ultrastructural organization and function of trabecular meshwork tissue through modulation of POSTN expression. This Mus musculus (Mouse) protein is Cytochrome P450 1B1.